Reading from the N-terminus, the 198-residue chain is 3-isopropylmalate dehydratase small subunit (198 aa).

Belongs to the LeuD family. LeuD type 1 subfamily. Heterodimer of LeuC and LeuD.

It carries out the reaction (2R,3S)-3-isopropylmalate = (2S)-2-isopropylmalate. The protein operates within amino-acid biosynthesis; L-leucine biosynthesis; L-leucine from 3-methyl-2-oxobutanoate: step 2/4. Its function is as follows. Catalyzes the isomerization between 2-isopropylmalate and 3-isopropylmalate, via the formation of 2-isopropylmaleate. The polypeptide is 3-isopropylmalate dehydratase small subunit (Mycobacterium avium (strain 104)).